The primary structure comprises 1403 residues: Eukaryotic translation initiation factor 4 gamma (1403 aa).

Polar residues-rich tracts occupy residues 1 to 11 (MSSKPPSNTPK), 19 to 39 (ASSQ…TATA), and 50 to 60 (EPTNTSRANAQ). 4 disordered regions span residues 1 to 381 (MSSK…GSTP), 439 to 464 (SRSG…RNGF), 488 to 774 (VVVP…KRDL), and 861 to 1003 (AFSD…EALL). Ser-83 carries the post-translational modification Phosphoserine. Positions 109–137 (DNTSKPSANSSAERTSSQHQKPETSSQIG) are enriched in polar residues. 2 stretches are compositionally biased toward low complexity: residues 190–208 (SGVS…SVTS) and 231–248 (PRPT…ANGA). The span at 249–269 (PTNKPSTDINTTDPATQTTQV) shows a compositional bias: polar residues. Residues 270–291 (SASNSPALSGSSTPSNTSSRSN) are compositionally biased toward low complexity. The span at 298-308 (FSEKRHYDRYG) shows a compositional bias: basic and acidic residues. Over residues 325–334 (NYNNSGNNRN) the composition is skewed to low complexity. Polar residues-rich tracts occupy residues 346-381 (RNYN…GSTP), 439-460 (SRSG…TLSP), and 493-508 (KNAS…SRAE). A phosphoserine mark is found at Ser-452, Ser-455, Ser-456, and Ser-459. A compositionally biased stretch (basic and acidic residues) spans 537–714 (IQEKAEAEAK…GKREADKNPE (178 aa)). The span at 720 to 737 (PLASSEANVDTSKQTNAT) shows a compositional bias: polar residues. Residues 741-754 (VVDKTKVEKLKASE) are compositionally biased toward basic and acidic residues. The segment covering 757–768 (STSSLSSPSHST) has biased composition (low complexity). Residues Ser-866 and Ser-882 each carry the phosphoserine modification. Residues 868 to 886 (RGMYSSSRQSSRSGSNTHS) show a composition bias toward low complexity. Thr-884 is modified (phosphothreonine). 4 positions are modified to phosphoserine: Ser-886, Ser-911, Ser-919, and Ser-921. Tyr-923 is modified (phosphotyrosine). A compositionally biased stretch (basic and acidic residues) spans 986–995 (KLTEKPAETK). The MIF4G domain maps to 1009–1245 (QRKVKGSLNK…MDVMDSRKNG (237 aa)). Residues 1266–1403 (AERKKALAES…QKDSNSKTSS (138 aa)) form a disordered region. Residues 1284–1295 (HGRDMNRGDSRM) are compositionally biased toward basic and acidic residues. Composition is skewed to polar residues over residues 1302–1313 (PPFSSSDWSNNK), 1328–1341 (SGTQ…SLSS), and 1348–1358 (VSRTPSRQNSA). Ser-1333 is subject to Phosphoserine. Residues 1383–1403 (LEEHDHDNDGGQKDSNSKTSS) show a composition bias toward basic and acidic residues.

It belongs to the eukaryotic initiation factor 4G family.

The protein resides in the cytoplasm. It is found in the perinuclear region. Functionally, component of the protein complex eIF4F, which is involved in the recognition of the mRNA cap, ATP-dependent unwinding of 5'-terminal secondary structure and recruitment of mRNA to the ribosome. This is Eukaryotic translation initiation factor 4 gamma (tif471) from Schizosaccharomyces pombe (strain 972 / ATCC 24843) (Fission yeast).